We begin with the raw amino-acid sequence, 301 residues long: MKIRVATRGSKLSLIQTEELLAQIKAVEPDVQFEIVVVKTTGDLIQDKPLFQIGVKGIFEKEVNLAVLRGEADMAVHSLKDLPSELTPGLVLAGFSKRAPPHDVLISRGGYTLETLPKGAVVGTSSVRRAEFLKAVRPDVEVKPLRGNVDTRVGKVLSGQYDAAVMAAAGLQRLYGSSPPVSIVPLRVEEVPPPPGQGIVVAVVKEEDSWLIDLLKKASDKTAAIEATAERAFLAGVGAGCHVAIGGVAKLTPQGSLEFTAGYAAGGAKYVVKVFGEDPVEVGKRAAQLIAEVRQKFKQRD.

C241 is subject to S-(dipyrrolylmethanemethyl)cysteine.

Belongs to the HMBS family. Requires dipyrromethane as cofactor.

The catalysed reaction is 4 porphobilinogen + H2O = hydroxymethylbilane + 4 NH4(+). It participates in porphyrin-containing compound metabolism; protoporphyrin-IX biosynthesis; coproporphyrinogen-III from 5-aminolevulinate: step 2/4. Its function is as follows. Tetrapolymerization of the monopyrrole PBG into the hydroxymethylbilane pre-uroporphyrinogen in several discrete steps. This Pyrobaculum islandicum (strain DSM 4184 / JCM 9189 / GEO3) protein is Probable porphobilinogen deaminase.